The chain runs to 258 residues: Pimeloyl-[acyl-carrier protein] methyl ester esterase (258 aa).

Residues Trp22, 84-85 (SL), and 145-149 (FLAIQ) contribute to the substrate site. Residue Ser84 is the Nucleophile of the active site. Active-site residues include Asp209 and His238. His238 is a binding site for substrate.

Belongs to the AB hydrolase superfamily. Carboxylesterase BioH family. As to quaternary structure, monomer.

Its subcellular location is the cytoplasm. The catalysed reaction is 6-carboxyhexanoyl-[ACP] methyl ester + H2O = 6-carboxyhexanoyl-[ACP] + methanol + H(+). It participates in cofactor biosynthesis; biotin biosynthesis. Functionally, the physiological role of BioH is to remove the methyl group introduced by BioC when the pimeloyl moiety is complete. It allows to synthesize pimeloyl-ACP via the fatty acid synthetic pathway through the hydrolysis of the ester bonds of pimeloyl-ACP esters. In Pseudoalteromonas atlantica (strain T6c / ATCC BAA-1087), this protein is Pimeloyl-[acyl-carrier protein] methyl ester esterase.